Consider the following 1547-residue polypeptide: DNA topoisomerase 2 (1547 aa).

The segment at 8 to 30 (FNKMSSPKQNGTGEPAPAKGQKG) is disordered. Residues 9–19 (NKMSSPKQNGT) are compositionally biased toward polar residues. Residues asparagine 99, asparagine 128, 156–158 (SSN), and 169–176 (GRNGYGAK) contribute to the ATP site. The tract at residues 351 to 353 (KKK) is interaction with DNA. 385-387 (QTK) is an ATP binding site. The 118-residue stretch at 463–580 (CTLILTEGDS…ELLKLPFLEE (118 aa)) folds into the Toprim domain. Mg(2+) contacts are provided by glutamate 469, aspartate 549, and aspartate 551. In terms of domain architecture, Topo IIA-type catalytic spans 723 to 1192 (IPSMIDGLKP…TAPMLWREDL (470 aa)). Tyrosine 813 serves as the catalytic O-(5'-phospho-DNA)-tyrosine intermediate. Positions 996–1005 (KLQTTISMTC) are interaction with DNA. 4 disordered regions span residues 1107–1134 (TALE…VDPD), 1209–1249 (EELN…ISDD), 1261–1423 (KTRK…MDSD), and 1459–1547 (RQRR…SLSD). The span at 1109 to 1123 (LEDDDAQESEEEEPE) shows a compositional bias: acidic residues. Residues 1124–1134 (PDPKGKPVDPD) show a composition bias toward basic and acidic residues. Residues 1216–1228 (KTSKAMAGKKNRK) show a composition bias toward basic residues. Basic and acidic residues-rich tracts occupy residues 1238–1249 (NGRRVEPKISDD) and 1294–1315 (EKPE…DGLK). Positions 1331–1344 (TFSGSSSGEMSASD) are enriched in low complexity. The segment covering 1373–1383 (DDSGSDSEPEL) has biased composition (acidic residues). Basic and acidic residues-rich tracts occupy residues 1384-1394 (LDNKIDSDHEA) and 1459-1488 (RQRR…DEKK). Residues 1513–1528 (KGKKKTAANPKKKAKK) are compositionally biased toward basic residues. The segment covering 1537–1547 (DFNISDSSLSD) has biased composition (polar residues).

This sequence belongs to the type II topoisomerase family. In terms of assembly, homodimer. Mg(2+) is required as a cofactor. Requires Mn(2+) as cofactor. It depends on Ca(2+) as a cofactor.

The protein localises to the nucleus. The catalysed reaction is ATP-dependent breakage, passage and rejoining of double-stranded DNA.. In terms of biological role, control of topological states of DNA by transient breakage and subsequent rejoining of DNA strands. Topoisomerase II makes double-strand breaks. This chain is DNA topoisomerase 2 (TOP2), found in Bombyx mori (Silk moth).